We begin with the raw amino-acid sequence, 199 residues long: Calcium-binding protein CAST (199 aa).

Basic and acidic residues predominate over residues 1-13; that stretch reads MGSVQDENKDEFK. The disordered stretch occupies residues 1–31; it reads MGSVQDENKDEFKQSLTRGKLKPSSSSSFRL. EF-hand domains are found at residues 36-71, 75-110, 125-160, and 163-198; these read LNSI…LGLD, SEIE…VFFG, QDES…LGLP, and SEID…VIVP. Ca(2+) is bound by residues Asp-49, Asn-51, Asp-53, and Glu-60. 8 residues coordinate Ca(2+): Asp-138, Asn-140, Asp-142, Glu-149, Asp-178, Asp-180, Arg-182, and Glu-187.

Functionally, not known. Probably binds 3 calcium ions. The protein is Calcium-binding protein CAST of Solanum tuberosum (Potato).